We begin with the raw amino-acid sequence, 156 residues long: MLTHLDSQGRANMVDVTEKAVTEREATAEARVRMLPQTLQMIVDGEHPKGDVFAVARIAGIQAAKKTSDLIPLCHPLMLTSVKVELSAEGQDTVRIVARCKLAGQTGVEMEALTAASVAALTIYDMCKAVDKGMVIEQVRLLEKLGGKSGHYKVQA.

Substrate is bound by residues 73–75 (LCH) and 110–111 (ME). The active site involves aspartate 125.

This sequence belongs to the MoaC family. In terms of assembly, homohexamer; trimer of dimers.

It catalyses the reaction (8S)-3',8-cyclo-7,8-dihydroguanosine 5'-triphosphate = cyclic pyranopterin phosphate + diphosphate. The protein operates within cofactor biosynthesis; molybdopterin biosynthesis. In terms of biological role, catalyzes the conversion of (8S)-3',8-cyclo-7,8-dihydroguanosine 5'-triphosphate to cyclic pyranopterin monophosphate (cPMP). The chain is Cyclic pyranopterin monophosphate synthase from Pseudomonas putida (strain GB-1).